A 449-amino-acid polypeptide reads, in one-letter code: Integrator complex subunit 15 (449 aa).

The protein belongs to the Integrator subunit 15 family. Component of the Integrator complex, composed of core subunits INTS1, INTS2, INTS3, INTS4, INTS5, INTS6, INTS7, INTS8, INTS9/RC74, INTS10, INTS11/CPSF3L, INTS12, INTS13, INTS14 and INTS15. The core complex associates with protein phosphatase 2A subunits PPP2CA and PPP2R1A, to form the Integrator-PP2A (INTAC) complex. INTS15 is part of the tail subcomplex, composed of INTS10, INTS13, INTS14 and INTS15.

The protein resides in the nucleus. Its subcellular location is the chromosome. Functionally, component of the integrator complex, a multiprotein complex that terminates RNA polymerase II (Pol II) transcription in the promoter-proximal region of genes. The integrator complex provides a quality checkpoint during transcription elongation by driving premature transcription termination of transcripts that are unfavorably configured for transcriptional elongation: the complex terminates transcription by (1) catalyzing dephosphorylation of the C-terminal domain (CTD) of Pol II subunit POLR2A/RPB1 and SUPT5H/SPT5, (2) degrading the exiting nascent RNA transcript via endonuclease activity and (3) promoting the release of Pol II from bound DNA. The integrator complex is also involved in terminating the synthesis of non-coding Pol II transcripts, such as enhancer RNAs (eRNAs), small nuclear RNAs (snRNAs), telomerase RNAs and long non-coding RNAs (lncRNAs). INTS15 is part of the integrator tail module that acts as a platform for the recruitment of transcription factors at promoters. Within the integrator complex, INTS15 is required to bridge different integrator modules. The chain is Integrator complex subunit 15 from Homo sapiens (Human).